Here is a 438-residue protein sequence, read N- to C-terminus: Na(+)/H(+) antiporter NhaA (438 aa).

11 consecutive transmembrane segments (helical) span residues 23-43, 62-82, 104-124, 133-153, 162-182, 185-205, 212-232, 302-322, 337-357, 372-392, and 410-430; these read FGGIFLFLNAVLAMVVANSFL, FFIGFSLHNWIDDVLMALFFL, SFPVIAALGGMIAPGLIYFFL, GFGIPMATDIAFALGVIMLLG, VFLITLAVADDLGAIVVIALF, TNLKFAWLLGALGVVLILAVL, SLIPYLLLGVLLWFCVHQSGI, FLAPISGYFIMPLFAFANAGV, LGVILGLCLGKPLGIFLITFI, WWHILGAGLLAGIGFTMSMFI, and IAILLGSLISGIIGALYLFVL.

Belongs to the NhaA Na(+)/H(+) (TC 2.A.33) antiporter family.

The protein localises to the cell inner membrane. The enzyme catalyses Na(+)(in) + 2 H(+)(out) = Na(+)(out) + 2 H(+)(in). Functionally, na(+)/H(+) antiporter that extrudes sodium in exchange for external protons. This chain is Na(+)/H(+) antiporter NhaA, found in Helicobacter pylori (strain G27).